A 514-amino-acid polypeptide reads, in one-letter code: Na(+)/H(+) antiporter NhaB (514 aa).

Helical transmembrane passes span leucine 21–isoleucine 41, glycine 43–leucine 63, isoleucine 88–methionine 108, phenylalanine 143–valine 163, leucine 203–proline 223, phenylalanine 239–phenylalanine 259, alanine 304–isoleucine 324, glutamine 349–isoleucine 369, leucine 390–alanine 410, alanine 448–isoleucine 468, and isoleucine 484–tryptophan 504.

The protein belongs to the NhaB Na(+)/H(+) (TC 2.A.34) antiporter family.

The protein resides in the cell inner membrane. It catalyses the reaction 2 Na(+)(in) + 3 H(+)(out) = 2 Na(+)(out) + 3 H(+)(in). Its function is as follows. Na(+)/H(+) antiporter that extrudes sodium in exchange for external protons. In Haemophilus influenzae (strain ATCC 51907 / DSM 11121 / KW20 / Rd), this protein is Na(+)/H(+) antiporter NhaB.